The primary structure comprises 378 residues: Probable methyltransferase At1g29790 (378 aa).

Residues 1–6 (MAGFTM) lie on the Cytoplasmic side of the membrane. The helical; Signal-anchor for type II membrane protein transmembrane segment at 7–29 (SLNLLLLVAMVATNILSLYHLSS) threads the bilayer. At 30–378 (TTNFFQSTVK…TALLQKPVAR (349 aa)) the chain is on the lumenal side. Positions 67-87 (TTHQPDKSTSTSTSRAAVSSS) are disordered. Over residues 74 to 87 (STSTSTSRAAVSSS) the composition is skewed to low complexity. Residue N247 is glycosylated (N-linked (GlcNAc...) asparagine).

This sequence belongs to the methyltransferase superfamily.

The protein resides in the golgi apparatus membrane. This chain is Probable methyltransferase At1g29790, found in Arabidopsis thaliana (Mouse-ear cress).